The following is a 416-amino-acid chain: Pectin acetylesterase 3 (416 aa).

The N-terminal stretch at 1–25 is a signal peptide; that stretch reads MKSVLRIAAAIFWLWLFIVLGVIGS. Asn-131 is a glycosylation site (N-linked (GlcNAc...) asparagine). Active-site charge relay system residues include Ser-198 and Asp-294. Asn-324 carries an N-linked (GlcNAc...) asparagine glycan. Catalysis depends on His-361, which acts as the Charge relay system.

The protein belongs to the pectinacetylesterase family.

Its subcellular location is the secreted. It localises to the cell wall. Functionally, hydrolyzes acetyl esters in homogalacturonan regions of pectin. In type I primary cell wall, galacturonic acid residues of pectin can be acetylated at the O-2 and O-3 positions. Decreasing the degree of acetylation of pectin gels in vitro alters their physical properties. The polypeptide is Pectin acetylesterase 3 (Arabidopsis thaliana (Mouse-ear cress)).